We begin with the raw amino-acid sequence, 225 residues long: Triosephosphate isomerase (225 aa).

9 to 11 (NMK) is a binding site for substrate. Residue His-93 is the Electrophile of the active site. Catalysis depends on Glu-141, which acts as the Proton acceptor. Residues Ile-146, Gly-181, and 202-203 (AS) contribute to the substrate site.

The protein belongs to the triosephosphate isomerase family. Homotetramer; dimer of dimers.

The protein localises to the cytoplasm. The catalysed reaction is D-glyceraldehyde 3-phosphate = dihydroxyacetone phosphate. It participates in carbohydrate biosynthesis; gluconeogenesis. It functions in the pathway carbohydrate degradation; glycolysis; D-glyceraldehyde 3-phosphate from glycerone phosphate: step 1/1. Its function is as follows. Involved in the gluconeogenesis. Catalyzes stereospecifically the conversion of dihydroxyacetone phosphate (DHAP) to D-glyceraldehyde-3-phosphate (G3P). The polypeptide is Triosephosphate isomerase (Caldivirga maquilingensis (strain ATCC 700844 / DSM 13496 / JCM 10307 / IC-167)).